We begin with the raw amino-acid sequence, 686 residues long: Acyl-CoA synthetase short-chain family member 3, mitochondrial (686 aa).

A mitochondrion-targeting transit peptide spans 1-29 (MKPSWLQCHKVTSAGGLGGPLPGSSPARG). 227–230 (EPGR) lines the CoA pocket. ATP is bound by residues 425 to 427 (GER) and 446 to 451 (DHWWQT). Residue lysine 518 is modified to N6-succinyllysine. Residue lysine 524 is modified to N6-acetyllysine. ATP-binding residues include aspartate 539, arginine 554, and arginine 565. Arginine 624 contacts CoA.

This sequence belongs to the ATP-dependent AMP-binding enzyme family.

The protein localises to the mitochondrion matrix. The catalysed reaction is acetate + ATP + CoA = acetyl-CoA + AMP + diphosphate. The enzyme catalyses propanoate + ATP + CoA = propanoyl-CoA + AMP + diphosphate. It carries out the reaction butanoate + ATP + CoA = butanoyl-CoA + AMP + diphosphate. In terms of biological role, catalyzes the synthesis of acetyl-CoA from short-chain fatty acids. Propionate is the preferred substrate but can also utilize acetate and butyrate with a much lower affinity. In Pongo abelii (Sumatran orangutan), this protein is Acyl-CoA synthetase short-chain family member 3, mitochondrial (ACSS3).